A 139-amino-acid chain; its full sequence is UPF0225 protein Bpro_4182 (139 aa).

The protein belongs to the UPF0225 family.

The polypeptide is UPF0225 protein Bpro_4182 (Polaromonas sp. (strain JS666 / ATCC BAA-500)).